The sequence spans 198 residues: tRNA (pseudouridine(54)-N(1))-methyltransferase (198 aa).

Residue Leu128 participates in S-adenosyl-L-methionine binding.

This sequence belongs to the methyltransferase superfamily. TrmY family. As to quaternary structure, homodimer.

The protein resides in the cytoplasm. It carries out the reaction pseudouridine(54) in tRNA + S-adenosyl-L-methionine = N(1)-methylpseudouridine(54) in tRNA + S-adenosyl-L-homocysteine + H(+). Functionally, specifically catalyzes the N1-methylation of pseudouridine at position 54 (Psi54) in tRNAs. In Natronomonas pharaonis (strain ATCC 35678 / DSM 2160 / CIP 103997 / JCM 8858 / NBRC 14720 / NCIMB 2260 / Gabara) (Halobacterium pharaonis), this protein is tRNA (pseudouridine(54)-N(1))-methyltransferase.